We begin with the raw amino-acid sequence, 611 residues long: Vitamin B12 transporter BtuB (611 aa).

Residues 1-22 (MQKSALAIALASLLTPISYLHA) form the signal peptide. Positions 29–36 (ETVVVTAN) match the TonB box motif. Positions 41–154 (KASSTLADVE…IGGVINIITK (114 aa)) constitute a TBDR plug domain. A TBDR beta-barrel domain is found at 159–611 (QQGTTVSAGL…AYYLNIGYQF (453 aa)). The TonB C-terminal box motif lies at 594–611 (NGYPAAERAYYLNIGYQF).

The protein belongs to the TonB-dependent receptor family. BtuB (TC 1.B.14.3.1) subfamily.

The protein localises to the cell outer membrane. Involved in the active translocation of vitamin B12 (cyanocobalamin) across the outer membrane to the periplasmic space. It derives its energy for transport by interacting with the trans-periplasmic membrane protein TonB. The polypeptide is Vitamin B12 transporter BtuB (Vibrio cholerae serotype O1 (strain ATCC 39541 / Classical Ogawa 395 / O395)).